Reading from the N-terminus, the 99-residue chain is MMMNAFFPAMALMVLVGCSTPSPVQKAQRVRVDPLRSLNMEALCKDQAAKRYNTGEQKIDVTAFEQFQGSYEMRGYTFRKEQFVCSFDADGHFLHLSMR.

Positions Met1 to Gly17 are cleaved as a signal peptide. Residue Cys18 is the site of N-palmitoyl cysteine attachment. The S-diacylglycerol cysteine moiety is linked to residue Cys18.

It is found in the cell membrane. This is an uncharacterized protein from Shigella flexneri.